Consider the following 53-residue polypeptide: ATP synthase protein 8 (53 aa).

A helical membrane pass occupies residues 9 to 29 (WLILFFIFSITLVIFNILNYF).

This sequence belongs to the ATPase protein 8 family. F-type ATPases have 2 components, CF(1) - the catalytic core - and CF(0) - the membrane proton channel.

The protein localises to the mitochondrion membrane. Mitochondrial membrane ATP synthase (F(1)F(0) ATP synthase or Complex V) produces ATP from ADP in the presence of a proton gradient across the membrane which is generated by electron transport complexes of the respiratory chain. F-type ATPases consist of two structural domains, F(1) - containing the extramembraneous catalytic core and F(0) - containing the membrane proton channel, linked together by a central stalk and a peripheral stalk. During catalysis, ATP synthesis in the catalytic domain of F(1) is coupled via a rotary mechanism of the central stalk subunits to proton translocation. Part of the complex F(0) domain. Minor subunit located with subunit a in the membrane. This chain is ATP synthase protein 8 (mt:ATPase8), found in Anopheles quadrimaculatus (Common malaria mosquito).